Here is a 332-residue protein sequence, read N- to C-terminus: Glycerol-3-phosphate dehydrogenase [NAD(P)+] (332 aa).

3 residues coordinate NADPH: Trp-11, Arg-30, and Lys-108. Positions 108, 137, and 139 each coordinate sn-glycerol 3-phosphate. An NADPH-binding site is contributed by Ala-141. Sn-glycerol 3-phosphate-binding residues include Lys-192, Asp-245, Ser-255, Arg-256, and Asn-257. Catalysis depends on Lys-192, which acts as the Proton acceptor. Arg-256 contributes to the NADPH binding site. 2 residues coordinate NADPH: Val-280 and Glu-282.

It belongs to the NAD-dependent glycerol-3-phosphate dehydrogenase family.

The protein localises to the cytoplasm. It carries out the reaction sn-glycerol 3-phosphate + NAD(+) = dihydroxyacetone phosphate + NADH + H(+). The enzyme catalyses sn-glycerol 3-phosphate + NADP(+) = dihydroxyacetone phosphate + NADPH + H(+). It participates in membrane lipid metabolism; glycerophospholipid metabolism. Catalyzes the reduction of the glycolytic intermediate dihydroxyacetone phosphate (DHAP) to sn-glycerol 3-phosphate (G3P), the key precursor for phospholipid synthesis. The chain is Glycerol-3-phosphate dehydrogenase [NAD(P)+] from Burkholderia ambifaria (strain MC40-6).